A 298-amino-acid chain; its full sequence is NAD kinase (298 aa).

The Proton acceptor role is filled by Asp80. NAD(+)-binding positions include 80-81 (DG), 154-155 (ND), Arg182, Asp184, 195-200 (TAYALS), Ala219, and Gln253.

The protein belongs to the NAD kinase family. A divalent metal cation is required as a cofactor.

It is found in the cytoplasm. The enzyme catalyses NAD(+) + ATP = ADP + NADP(+) + H(+). Functionally, involved in the regulation of the intracellular balance of NAD and NADP, and is a key enzyme in the biosynthesis of NADP. Catalyzes specifically the phosphorylation on 2'-hydroxyl of the adenosine moiety of NAD to yield NADP. In Acidovorax sp. (strain JS42), this protein is NAD kinase.